The sequence spans 566 residues: MQDFKVAISNCLKEKIEDLSKEEIEALIEVPPNKDMGDYAFPCFKLAKVFRKAPNMIASELAESIEPSGEITKVIQLGGYVNFFVNKSQLAETVIKKVLDEKENYGHSDFGKDKTVIVEYSSPNIAKPFHIGHIRTTVIGNALYKIYDSQGYKTIRINHLGDYGTQFGKLIVAFKKWGEKEVVESNPIPELLKLYVRFHDEAEQHPEMEDEARAWFNKLENGDEEAQELWQWFRNESLKEFNRVYKLLDIEFDSLAGESFYSDKMNRVIELLEEKNLLKESKGARIVDLEEYKMPPALITKNDGSTLYMTRDLAAAIYRKETYDFDKCIYVVGSQQNLHFQQWFKVIELMGYDWAKDLIHVGFGMVALEEGTMSTRKGRVVFLEDALNQAIDKTKEIILAKNPNAKNVDEISKQVGVGAVVFQELSNSRIKDYTFSWERTLSFDGETGPYVQYTHARCCAVLRKAEVEVTSDIDYSLLADEDSAEVLRVIESFNKNILLALKKNEPHIVTRFMLDLAQAFNKFYHDNPILVENLEIRKARLALVLATKQTLENSLKLLGMHAPERM.

The 'HIGH' region signature appears at 123-133; sequence PNIAKPFHIGH.

It belongs to the class-I aminoacyl-tRNA synthetase family. Monomer.

It is found in the cytoplasm. The catalysed reaction is tRNA(Arg) + L-arginine + ATP = L-arginyl-tRNA(Arg) + AMP + diphosphate. This is Arginine--tRNA ligase from Clostridioides difficile (strain 630) (Peptoclostridium difficile).